A 275-amino-acid polypeptide reads, in one-letter code: 2,3,4,5-tetrahydropyridine-2,6-dicarboxylate N-succinyltransferase (275 aa).

Substrate contacts are provided by R104 and D141.

This sequence belongs to the transferase hexapeptide repeat family. Homotrimer.

The protein resides in the cytoplasm. It carries out the reaction (S)-2,3,4,5-tetrahydrodipicolinate + succinyl-CoA + H2O = (S)-2-succinylamino-6-oxoheptanedioate + CoA. Its pathway is amino-acid biosynthesis; L-lysine biosynthesis via DAP pathway; LL-2,6-diaminopimelate from (S)-tetrahydrodipicolinate (succinylase route): step 1/3. This Actinobacillus succinogenes (strain ATCC 55618 / DSM 22257 / CCUG 43843 / 130Z) protein is 2,3,4,5-tetrahydropyridine-2,6-dicarboxylate N-succinyltransferase.